Reading from the N-terminus, the 282-residue chain is 2-dehydro-3-deoxyphosphooctonate aldolase (282 aa).

This sequence belongs to the KdsA family.

The protein localises to the cytoplasm. It catalyses the reaction D-arabinose 5-phosphate + phosphoenolpyruvate + H2O = 3-deoxy-alpha-D-manno-2-octulosonate-8-phosphate + phosphate. The protein operates within carbohydrate biosynthesis; 3-deoxy-D-manno-octulosonate biosynthesis; 3-deoxy-D-manno-octulosonate from D-ribulose 5-phosphate: step 2/3. It participates in bacterial outer membrane biogenesis; lipopolysaccharide biosynthesis. This is 2-dehydro-3-deoxyphosphooctonate aldolase from Shewanella pealeana (strain ATCC 700345 / ANG-SQ1).